Reading from the N-terminus, the 150-residue chain is Aspartate 1-decarboxylase (150 aa).

Residue Ser-25 is the Schiff-base intermediate with substrate; via pyruvic acid of the active site. Ser-25 is modified (pyruvic acid (Ser)). A substrate-binding site is contributed by Thr-57. Tyr-58 acts as the Proton donor in catalysis. Residue 73 to 75 (GAA) coordinates substrate.

It belongs to the PanD family. As to quaternary structure, heterooctamer of four alpha and four beta subunits. Requires pyruvate as cofactor. In terms of processing, is synthesized initially as an inactive proenzyme, which is activated by self-cleavage at a specific serine bond to produce a beta-subunit with a hydroxyl group at its C-terminus and an alpha-subunit with a pyruvoyl group at its N-terminus.

It localises to the cytoplasm. It carries out the reaction L-aspartate + H(+) = beta-alanine + CO2. It functions in the pathway cofactor biosynthesis; (R)-pantothenate biosynthesis; beta-alanine from L-aspartate: step 1/1. Catalyzes the pyruvoyl-dependent decarboxylation of aspartate to produce beta-alanine. The polypeptide is Aspartate 1-decarboxylase (Kocuria rhizophila (strain ATCC 9341 / DSM 348 / NBRC 103217 / DC2201)).